A 260-amino-acid polypeptide reads, in one-letter code: Small ribosomal subunit protein uS2 (260 aa).

The interval 224–260 (GRQGQDAGEDSAEKTFADTADGEGDFEESSNNENQEA) is disordered. Residues 243–260 (ADGEGDFEESSNNENQEA) show a composition bias toward acidic residues.

It belongs to the universal ribosomal protein uS2 family.

The sequence is that of Small ribosomal subunit protein uS2 from Oenococcus oeni (strain ATCC BAA-331 / PSU-1).